The primary structure comprises 379 residues: Cobalt-precorrin-5B C(1)-methyltransferase (379 aa).

The protein belongs to the CbiD family.

It catalyses the reaction Co-precorrin-5B + S-adenosyl-L-methionine = Co-precorrin-6A + S-adenosyl-L-homocysteine. Its pathway is cofactor biosynthesis; adenosylcobalamin biosynthesis; cob(II)yrinate a,c-diamide from sirohydrochlorin (anaerobic route): step 6/10. Its function is as follows. Catalyzes the methylation of C-1 in cobalt-precorrin-5B to form cobalt-precorrin-6A. This is Cobalt-precorrin-5B C(1)-methyltransferase from Salmonella paratyphi A (strain ATCC 9150 / SARB42).